The primary structure comprises 124 residues: Fluoride-specific ion channel FluC (124 aa).

Transmembrane regions (helical) follow at residues 1 to 21 (MLNTLVVFLGAGLGGALRYGV), 36 to 56 (TMIINVSGSLAMGILAGWFVV), 70 to 90 (TGILGGFTTFSTFSLEAFLLI), and 100 to 120 (LYVIGSVAAGIAGVAVSFAII). Positions 74 and 77 each coordinate Na(+).

The protein belongs to the fluoride channel Fluc/FEX (TC 1.A.43) family.

The protein resides in the cell inner membrane. It catalyses the reaction fluoride(in) = fluoride(out). Its activity is regulated as follows. Na(+) is not transported, but it plays an essential structural role and its presence is essential for fluoride channel function. Its function is as follows. Fluoride-specific ion channel. Important for reducing fluoride concentration in the cell, thus reducing its toxicity. This Methylobacterium sp. (strain 4-46) protein is Fluoride-specific ion channel FluC.